Reading from the N-terminus, the 314-residue chain is Methionyl-tRNA formyltransferase (314 aa).

Position 110–113 (110–113 (SLLP)) interacts with (6S)-5,6,7,8-tetrahydrofolate.

It belongs to the Fmt family.

The catalysed reaction is L-methionyl-tRNA(fMet) + (6R)-10-formyltetrahydrofolate = N-formyl-L-methionyl-tRNA(fMet) + (6S)-5,6,7,8-tetrahydrofolate + H(+). Attaches a formyl group to the free amino group of methionyl-tRNA(fMet). The formyl group appears to play a dual role in the initiator identity of N-formylmethionyl-tRNA by promoting its recognition by IF2 and preventing the misappropriation of this tRNA by the elongation apparatus. This Bacillus thuringiensis subsp. konkukian (strain 97-27) protein is Methionyl-tRNA formyltransferase.